The chain runs to 708 residues: uncharacterized protein (708 aa).

Disordered stretches follow at residues 1–79 (MHAR…RRSS), 119–301 (AGEF…IHQR), 349–390 (YLSH…GDEN), and 410–461 (SNSF…KRQR). Over residues 65–74 (LPPPLPPPPV) the composition is skewed to pro residues. Polar residues predominate over residues 238 to 249 (DEAQSKTGSSSA). Residues 260 to 274 (SKVSEGSSSLSAGSG) are compositionally biased toward low complexity. The segment covering 410-419 (SNSFPSSILR) has biased composition (polar residues). The span at 442–461 (VGEKRPGEGSDLEEGSKRQR) shows a compositional bias: basic and acidic residues.

This is an uncharacterized protein from Arabidopsis thaliana (Mouse-ear cress).